The primary structure comprises 117 residues: UPF0102 protein YPN_3432 (117 aa).

It belongs to the UPF0102 family.

This chain is UPF0102 protein YPN_3432, found in Yersinia pestis bv. Antiqua (strain Nepal516).